The following is a 221-amino-acid chain: 6-phosphogluconate phosphatase (221 aa).

Asp-10 serves as the catalytic Nucleophile. Mg(2+)-binding residues include Asp-10, Asp-12, and Asp-167. A substrate-binding site is contributed by Asp-10–Asp-12.

Belongs to the HAD-like hydrolase superfamily. CbbY/CbbZ/Gph/YieH family. The cofactor is Mg(2+). Requires Mn(2+) as cofactor. Co(2+) is required as a cofactor. Zn(2+) serves as cofactor.

Catalyzes strongly the dephosphorylation of 6-phosphogluconate (6P-Glu) and slightly the dephosphorylation of dihydroxyacetone phosphate (DHAP) and phosphoenolpyruvate (PEP). Also hydrolyzes both purines (GMP and IMP) and pyrimidines as secondary substrates. The sequence is that of 6-phosphogluconate phosphatase (yieH) from Escherichia coli (strain K12).